Reading from the N-terminus, the 158-residue chain is SsrA-binding protein (158 aa).

Basic and acidic residues predominate over residues 133–148 (KAQDKRETSAKRDWNR). A disordered region spans residues 133–158 (KAQDKRETSAKRDWNRQKARLLKQNG). Basic residues predominate over residues 149 to 158 (QKARLLKQNG).

Belongs to the SmpB family.

The protein localises to the cytoplasm. Required for rescue of stalled ribosomes mediated by trans-translation. Binds to transfer-messenger RNA (tmRNA), required for stable association of tmRNA with ribosomes. tmRNA and SmpB together mimic tRNA shape, replacing the anticodon stem-loop with SmpB. tmRNA is encoded by the ssrA gene; the 2 termini fold to resemble tRNA(Ala) and it encodes a 'tag peptide', a short internal open reading frame. During trans-translation Ala-aminoacylated tmRNA acts like a tRNA, entering the A-site of stalled ribosomes, displacing the stalled mRNA. The ribosome then switches to translate the ORF on the tmRNA; the nascent peptide is terminated with the 'tag peptide' encoded by the tmRNA and targeted for degradation. The ribosome is freed to recommence translation, which seems to be the essential function of trans-translation. The sequence is that of SsrA-binding protein from Jannaschia sp. (strain CCS1).